A 434-amino-acid chain; its full sequence is Serine hydroxymethyltransferase (434 aa).

Residues Leu133 and 137 to 139 (GHL) each bind (6S)-5,6,7,8-tetrahydrofolate. Residue Lys242 is modified to N6-(pyridoxal phosphate)lysine.

It belongs to the SHMT family. In terms of assembly, homodimer. It depends on pyridoxal 5'-phosphate as a cofactor.

It is found in the cytoplasm. It carries out the reaction (6R)-5,10-methylene-5,6,7,8-tetrahydrofolate + glycine + H2O = (6S)-5,6,7,8-tetrahydrofolate + L-serine. It functions in the pathway one-carbon metabolism; tetrahydrofolate interconversion. The protein operates within amino-acid biosynthesis; glycine biosynthesis; glycine from L-serine: step 1/1. Functionally, catalyzes the reversible interconversion of serine and glycine with tetrahydrofolate (THF) serving as the one-carbon carrier. This reaction serves as the major source of one-carbon groups required for the biosynthesis of purines, thymidylate, methionine, and other important biomolecules. Also exhibits THF-independent aldolase activity toward beta-hydroxyamino acids, producing glycine and aldehydes, via a retro-aldol mechanism. In Methylorubrum populi (strain ATCC BAA-705 / NCIMB 13946 / BJ001) (Methylobacterium populi), this protein is Serine hydroxymethyltransferase.